Consider the following 506-residue polypeptide: Maturase K (506 aa).

It belongs to the intron maturase 2 family. MatK subfamily.

It localises to the plastid. It is found in the chloroplast. In terms of biological role, usually encoded in the trnK tRNA gene intron. Probably assists in splicing its own and other chloroplast group II introns. The polypeptide is Maturase K (Atractylodes lancea (Atractylodes japonica)).